The sequence spans 501 residues: Putative ribose/galactose/methyl galactoside import ATP-binding protein 1 (501 aa).

ABC transporter domains lie at 5–237 (VSLS…VGRQ) and 249–492 (VPGE…MTRS). Residue 37–44 (GENGAGKS) coordinates ATP.

The protein belongs to the ABC transporter superfamily. Carbohydrate importer 2 (CUT2) (TC 3.A.1.2) family.

The protein localises to the cell inner membrane. The enzyme catalyses D-ribose(out) + ATP + H2O = D-ribose(in) + ADP + phosphate + H(+). The catalysed reaction is D-galactose(out) + ATP + H2O = D-galactose(in) + ADP + phosphate + H(+). In terms of biological role, part of an ABC transporter complex involved in carbohydrate import. Could be involved in ribose, galactose and/or methyl galactoside import. Responsible for energy coupling to the transport system. This is Putative ribose/galactose/methyl galactoside import ATP-binding protein 1 from Rhizobium meliloti (strain 1021) (Ensifer meliloti).